The sequence spans 503 residues: Probable cytosol aminopeptidase (503 aa).

Positions 270 and 275 each coordinate Mn(2+). Lysine 282 is a catalytic residue. 3 residues coordinate Mn(2+): aspartate 293, aspartate 352, and glutamate 354. Arginine 356 is a catalytic residue.

The protein belongs to the peptidase M17 family. It depends on Mn(2+) as a cofactor.

The protein localises to the cytoplasm. The enzyme catalyses Release of an N-terminal amino acid, Xaa-|-Yaa-, in which Xaa is preferably Leu, but may be other amino acids including Pro although not Arg or Lys, and Yaa may be Pro. Amino acid amides and methyl esters are also readily hydrolyzed, but rates on arylamides are exceedingly low.. The catalysed reaction is Release of an N-terminal amino acid, preferentially leucine, but not glutamic or aspartic acids.. Functionally, presumably involved in the processing and regular turnover of intracellular proteins. Catalyzes the removal of unsubstituted N-terminal amino acids from various peptides. This Salmonella agona (strain SL483) protein is Probable cytosol aminopeptidase.